The following is a 747-amino-acid chain: Histone-lysine N-methyltransferase EZH1 (747 aa).

Residues 188 to 231 (DEEEDGHNDPSDGKQDDSKEDLPVTRKRKRHAIEGNKKSSKKQF) are disordered. Residues 194–211 (HNDPSDGKQDDSKEDLPV) are compositionally biased toward basic and acidic residues. K327 participates in a covalent cross-link: Glycyl lysine isopeptide (Lys-Gly) (interchain with G-Cter in SUMO2). The segment at 368–414 (VSASCSNASASAMAETKEGDSDRDTGNDWASSSSEANSRCQTPTKQK) is disordered. The segment covering 369 to 381 (SASCSNASASAMA) has biased composition (low complexity). A compositionally biased stretch (basic and acidic residues) spans 382–393 (ETKEGDSDRDTG). A compositionally biased stretch (polar residues) spans 395–414 (DWASSSSEANSRCQTPTKQK). The Nuclear localization signal motif lies at 491 to 496 (QKKKRK). In terms of domain architecture, CXC spans 504 to 606 (CRKIQLKKDN…CKVVSCKNCS (103 aa)). The 116-residue stretch at 613 to 728 (KHLLLAPSDV…AGEELFFDYR (116 aa)) folds into the SET domain.

The protein belongs to the class V-like SAM-binding methyltransferase superfamily. Histone-lysine methyltransferase family. EZ subfamily. Component of the PRC2/EED-EZH1 complex, which includes EED, EZH1, SUZ12, RBBP4 and AEBP2. The PRC2/EED-EZH1 is less abundant than the PRC2/EED-EZH2 complex, has weak methyltransferase activity and compacts chromatin in the absence of the methyltransferase cofactor S-adenosyl-L-methionine (SAM). Interacts with EZHIP; the interaction blocks EZH1 methyltransferase activity. Expressed at high levels in kidney, adrenal gland, testis and brain.

Its subcellular location is the nucleus. It carries out the reaction L-lysyl(27)-[histone H3] + 3 S-adenosyl-L-methionine = N(6),N(6),N(6)-trimethyl-L-lysyl(27)-[histone H3] + 3 S-adenosyl-L-homocysteine + 3 H(+). Its function is as follows. Polycomb group (PcG) protein. Catalytic subunit of the PRC2/EED-EZH1 complex, which methylates 'Lys-27' of histone H3, leading to transcriptional repression of the affected target gene. Able to mono-, di- and trimethylate 'Lys-27' of histone H3 to form H3K27me1, H3K27me2 and H3K27me3, respectively. Required for embryonic stem cell derivation and self-renewal, suggesting that it is involved in safeguarding embryonic stem cell identity. Compared to EZH2-containing complexes, it is less abundant in embryonic stem cells, has weak methyltransferase activity and plays a less critical role in forming H3K27me3, which is required for embryonic stem cell identity and proper differentiation. This chain is Histone-lysine N-methyltransferase EZH1 (Ezh1), found in Mus musculus (Mouse).